The sequence spans 267 residues: Phosphate import ATP-binding protein PstB (267 aa).

An ABC transporter domain is found at 12–251 (VSLDNVSIRY…EFDKTKNMFN (240 aa)). 44–51 (GPSGCGKS) contacts ATP.

This sequence belongs to the ABC transporter superfamily. Phosphate importer (TC 3.A.1.7) family. As to quaternary structure, the complex is composed of two ATP-binding proteins (PstB), two transmembrane proteins (PstC and PstA) and a solute-binding protein (PstS).

The protein resides in the cell inner membrane. It carries out the reaction phosphate(out) + ATP + H2O = ADP + 2 phosphate(in) + H(+). Functionally, part of the ABC transporter complex PstSACB involved in phosphate import. Responsible for energy coupling to the transport system. The sequence is that of Phosphate import ATP-binding protein PstB from Prochlorococcus marinus (strain NATL2A).